Reading from the N-terminus, the 340-residue chain is UPF0324 membrane protein OB3406 (340 aa).

9 consecutive transmembrane segments (helical) span residues serine 12–cysteine 31, leucine 36–leucine 58, glycine 94–alanine 116, serine 126–valine 148, threonine 155–tyrosine 177, isoleucine 215–tyrosine 237, isoleucine 257–leucine 276, valine 281–valine 303, and valine 315–methionine 337.

It belongs to the UPF0324 family.

It is found in the cell membrane. The chain is UPF0324 membrane protein OB3406 from Oceanobacillus iheyensis (strain DSM 14371 / CIP 107618 / JCM 11309 / KCTC 3954 / HTE831).